Consider the following 394-residue polypeptide: Tubulin-like protein CetZ4 (394 aa).

Residues 10–14, 110–112, glutamate 142, asparagine 169, and asparagine 187 each bind GTP; these read QAGGK and GTG.

It belongs to the CetZ family.

The protein resides in the cytoplasm. Functionally, involved in cell shape control. The chain is Tubulin-like protein CetZ4 from Haloferax volcanii (strain ATCC 29605 / DSM 3757 / JCM 8879 / NBRC 14742 / NCIMB 2012 / VKM B-1768 / DS2) (Halobacterium volcanii).